Reading from the N-terminus, the 127-residue chain is Ribosome-binding factor A (127 aa).

It belongs to the RbfA family. As to quaternary structure, monomer. Binds 30S ribosomal subunits, but not 50S ribosomal subunits or 70S ribosomes.

The protein resides in the cytoplasm. Functionally, one of several proteins that assist in the late maturation steps of the functional core of the 30S ribosomal subunit. Associates with free 30S ribosomal subunits (but not with 30S subunits that are part of 70S ribosomes or polysomes). Required for efficient processing of 16S rRNA. May interact with the 5'-terminal helix region of 16S rRNA. The polypeptide is Ribosome-binding factor A (Rickettsia typhi (strain ATCC VR-144 / Wilmington)).